Here is a 218-residue protein sequence, read N- to C-terminus: Glutathione S-transferase Mu 1 (218 aa).

A GST N-terminal domain is found at 2 to 88 (PMILGYWDIR…YIARKHNLCG (87 aa)). Position 7–8 (7–8 (YW)) interacts with glutathione. A Phosphothreonine modification is found at threonine 34. Residues 43-46 (RSQW), lysine 50, 59-60 (NL), and 72-73 (QS) contribute to the glutathione site. The GST C-terminal domain occupies 90–208 (TEEEKIRVDI…KSSRFLPRPV (119 aa)). Tyrosine 116 is a substrate binding site. Position 210 is a phosphoserine (serine 210).

This sequence belongs to the GST superfamily. Mu family. Homodimer. In terms of tissue distribution, liver (at protein level).

The protein localises to the cytoplasm. It catalyses the reaction RX + glutathione = an S-substituted glutathione + a halide anion + H(+). It carries out the reaction prostaglandin A2 + glutathione = prostaglandin A2-S-(R)-glutathione. The enzyme catalyses prostaglandin J2 + glutathione = prostaglandin J2-S-(R)-glutathione. The catalysed reaction is prostaglandin J2 + glutathione = prostaglandin J2-S-(S)-glutathione. It catalyses the reaction prostaglandin A2 + glutathione = prostaglandin A2-S-(S)-glutathione. It carries out the reaction 11(S)-hydroxy-14(S),15(S)-epoxy-(5Z,8Z,12E)-eicosatrienoate + glutathione = (11S,15S)-dihydroxy-14(R)-S-glutathionyl-(5Z,8Z,12E)-eicosatrienoate. In terms of biological role, conjugation of reduced glutathione to a wide number of exogenous and endogenous hydrophobic electrophiles. Involved in the formation of glutathione conjugates of both prostaglandin A2 (PGA2) and prostaglandin J2 (PGJ2). Participates in the formation of novel hepoxilin regioisomers. The chain is Glutathione S-transferase Mu 1 from Homo sapiens (Human).